A 388-amino-acid chain; its full sequence is Succinate--CoA ligase [ADP-forming] subunit beta (388 aa).

Residues 9–244 (KQIFAKYKLP…PSQDDPREAL (236 aa)) enclose the ATP-grasp domain. ATP-binding positions include Lys46, 53–55 (GRG), Glu99, Ala102, and Glu107. Positions 199 and 213 each coordinate Mg(2+). Substrate contacts are provided by residues Asn264 and 321–323 (GIV).

Belongs to the succinate/malate CoA ligase beta subunit family. In terms of assembly, heterotetramer of two alpha and two beta subunits. Mg(2+) is required as a cofactor.

It carries out the reaction succinate + ATP + CoA = succinyl-CoA + ADP + phosphate. The catalysed reaction is GTP + succinate + CoA = succinyl-CoA + GDP + phosphate. It participates in carbohydrate metabolism; tricarboxylic acid cycle; succinate from succinyl-CoA (ligase route): step 1/1. Succinyl-CoA synthetase functions in the citric acid cycle (TCA), coupling the hydrolysis of succinyl-CoA to the synthesis of either ATP or GTP and thus represents the only step of substrate-level phosphorylation in the TCA. The beta subunit provides nucleotide specificity of the enzyme and binds the substrate succinate, while the binding sites for coenzyme A and phosphate are found in the alpha subunit. The protein is Succinate--CoA ligase [ADP-forming] subunit beta of Glaesserella parasuis serovar 5 (strain SH0165) (Haemophilus parasuis).